The sequence spans 432 residues: MIKKLSIQPASGLQGDLSVPGDKSVSHRGLILGAISQGTTTLHHFLPAADCLSTLTALQKLGVPIKRVDTTVTISGRGLRGLTQPQQPLDMGNAGTATRLLTGLLAGQPFETTLVGDTSLSQRPMERVRQPLQAMGAQVQLTAGHLPMTITGRTLHGSRTEMQVASAQVKSALILAALQADQASTIIEKLPTRDHTERLLQQFGGQIETAPDQRTITVQPQPALVGQSLTIPGDFSSAAFFVTAATIIPNSHVRLTNVGLNPTRTGFLNILRRMGGQVTVDHEHRMGEPVGTLDVRFAQLHPVQVTATEIPAVIDELPLVALLAATANGISTISGAAELRVKETDRIATIVTELQKLGVRITSQPDGFVIDGRKSWRQPTEPLASHGDHRIGMMMAIAALRLAAPAELESAEAVNISYPTFFEDLARLSQGV.

Residues Lys-23, Ser-24, and Arg-28 each contribute to the 3-phosphoshikimate site. Lys-23 contributes to the phosphoenolpyruvate binding site. Positions 95 and 123 each coordinate phosphoenolpyruvate. 4 residues coordinate 3-phosphoshikimate: Ser-166, Gln-168, Asp-315, and Lys-342. Gln-168 is a phosphoenolpyruvate binding site. Asp-315 (proton acceptor) is an active-site residue. 2 residues coordinate phosphoenolpyruvate: Arg-346 and Arg-390.

The protein belongs to the EPSP synthase family. As to quaternary structure, monomer.

The protein localises to the cytoplasm. The enzyme catalyses 3-phosphoshikimate + phosphoenolpyruvate = 5-O-(1-carboxyvinyl)-3-phosphoshikimate + phosphate. It participates in metabolic intermediate biosynthesis; chorismate biosynthesis; chorismate from D-erythrose 4-phosphate and phosphoenolpyruvate: step 6/7. Catalyzes the transfer of the enolpyruvyl moiety of phosphoenolpyruvate (PEP) to the 5-hydroxyl of shikimate-3-phosphate (S3P) to produce enolpyruvyl shikimate-3-phosphate and inorganic phosphate. The sequence is that of 3-phosphoshikimate 1-carboxyvinyltransferase from Lactiplantibacillus plantarum (strain ATCC BAA-793 / NCIMB 8826 / WCFS1) (Lactobacillus plantarum).